Here is a 512-residue protein sequence, read N- to C-terminus: Zinc metalloprotease mde10 (512 aa).

The N-terminal stretch at 1 to 15 is a signal peptide; the sequence is MRLVLLFSCVLAVSS. A glycan (N-linked (GlcNAc...) asparagine) is linked at N35. The Peptidase M12B domain maps to 65 to 306; it reads QTLWIGVVAD…KYVSLSCLSK (242 aa). H229 is a Zn(2+) binding site. The active site involves E230. Residues H233 and H239 each contribute to the Zn(2+) site. Disulfide bonds link C246-C254 and C374-C394. One can recognise a Disintegrin domain in the interval 315-402; sequence LGTCGNGIVE…KCPVDENWDD (88 aa). An N-linked (GlcNAc...) asparagine glycan is attached at N432.

The cofactor is Zn(2+). In terms of processing, glycosylated.

Its subcellular location is the endoplasmic reticulum. The protein resides in the spore wall. Its function is as follows. Has a role in the development of the spore envelope. This is Zinc metalloprotease mde10 (mde10) from Schizosaccharomyces pombe (strain 972 / ATCC 24843) (Fission yeast).